The primary structure comprises 257 residues: Imidazole glycerol phosphate synthase subunit HisF (257 aa).

Catalysis depends on residues Asp11 and Asp130.

The protein belongs to the HisA/HisF family. As to quaternary structure, heterodimer of HisH and HisF.

Its subcellular location is the cytoplasm. It carries out the reaction 5-[(5-phospho-1-deoxy-D-ribulos-1-ylimino)methylamino]-1-(5-phospho-beta-D-ribosyl)imidazole-4-carboxamide + L-glutamine = D-erythro-1-(imidazol-4-yl)glycerol 3-phosphate + 5-amino-1-(5-phospho-beta-D-ribosyl)imidazole-4-carboxamide + L-glutamate + H(+). The protein operates within amino-acid biosynthesis; L-histidine biosynthesis; L-histidine from 5-phospho-alpha-D-ribose 1-diphosphate: step 5/9. IGPS catalyzes the conversion of PRFAR and glutamine to IGP, AICAR and glutamate. The HisF subunit catalyzes the cyclization activity that produces IGP and AICAR from PRFAR using the ammonia provided by the HisH subunit. This chain is Imidazole glycerol phosphate synthase subunit HisF, found in Shewanella sp. (strain MR-7).